The chain runs to 57 residues: UPF0434 protein Spea_1772 (57 aa).

Belongs to the UPF0434 family.

The protein is UPF0434 protein Spea_1772 of Shewanella pealeana (strain ATCC 700345 / ANG-SQ1).